The following is a 697-amino-acid chain: Potassium-transporting ATPase ATP-binding subunit (697 aa).

4 helical membrane passes run 55 to 75 (PIMFVVEIGFIITLILSFLPS), 82 to 102 (GWFNITVSLILLFTVLFANFA), 245 to 265 (LTLIFLIVVVTLPIFTNYLGF), and 271 to 291 (VLVALLVCLIPTTIGGLLSAI). Asp-324 (4-aspartylphosphate intermediate) is an active-site residue. ATP-binding positions include Asp-361, Glu-365, 393–400 (FKAETRMS), and Lys-412. Mg(2+)-binding residues include Asp-535 and Asp-539. 3 consecutive transmembrane segments (helical) span residues 605–625 (FAIIPAMFTLAIPQMEALNIM), 633–653 (AILSALIFNAVIIPLLIPLAM), and 677–697 (GGVIVPFIGIKVIDMIVGLFI).

The protein belongs to the cation transport ATPase (P-type) (TC 3.A.3) family. Type IA subfamily. The system is composed of three essential subunits: KdpA, KdpB and KdpC.

The protein resides in the cell membrane. The enzyme catalyses K(+)(out) + ATP + H2O = K(+)(in) + ADP + phosphate + H(+). Functionally, part of the high-affinity ATP-driven potassium transport (or Kdp) system, which catalyzes the hydrolysis of ATP coupled with the electrogenic transport of potassium into the cytoplasm. This subunit is responsible for energy coupling to the transport system and for the release of the potassium ions to the cytoplasm. The polypeptide is Potassium-transporting ATPase ATP-binding subunit (Bacillus mycoides (strain KBAB4) (Bacillus weihenstephanensis)).